The primary structure comprises 496 residues: MPLITTETGKKMHVLEDGRKLITVIPGDGIGPECVEATLKVLEAAKAPLAYEVREAGASVFRRGIASGVPQETIESIRKTRVVLKGPLETPVGYGEKSANVTLRKLFETYANVRPVREFPNVPTPYAGRGIDLVVVRENVEDLYAGIEHMQTPSVAQTLKLISWKGSEKIVRFAFELARAEGRKKVHCATKSNIMKLAEGTLKRAFEQVAQEYPDIEAVHIIVDNAAHQLVKRPEQFEVIVTTNMNGDILSDLTSGLIGGLGFAPSANIGNEVAIFEAVHGSAPKYAGKNVINPTAVLLSAVMMLRYLEEFATADLIENALLYTLEEGRVLTGDVVGYDRGAKTTEYTEAIIQNLGKTPRKTQVRGYKPFRLPQVDGAIAPIVPRSRRVVGVDVFVETNLLPEALGKALEDLAAGTPFRLKMISNRGTQVYPPTGGLTDLVDHYRCRFLYTGEGEAKDPEILDLVSRVASRFRWMHLEKLQEFDGEPGFTKAQGED.

Residues Leu-88 and Thr-90 each coordinate NADP(+). D-threo-isocitrate contacts are provided by Ser-98, Asn-100, Arg-104, Arg-114, and Arg-137. Asn-193, Gln-229, and Lys-232 together coordinate NADP(+). Position 248 (Asp-248) interacts with Mg(2+). The NADP(+) site is built by Glu-277, Gly-281, Ser-282, Ala-283, Lys-285, Tyr-286, and Asn-293.

This sequence belongs to the isocitrate and isopropylmalate dehydrogenases family. As to quaternary structure, homodimer. Requires Mg(2+) as cofactor. It depends on Mn(2+) as a cofactor.

It carries out the reaction D-threo-isocitrate + NADP(+) = 2-oxoglutarate + CO2 + NADPH. Catalyzes the oxidative decarboxylation of isocitrate to 2-oxoglutarate and carbon dioxide with the concomitant reduction of NADP(+). This is Isocitrate dehydrogenase [NADP] (icd) from Thermus thermophilus (strain ATCC 27634 / DSM 579 / HB8).